The chain runs to 193 residues: Threonylcarbamoyl-AMP synthase (193 aa).

In terms of domain architecture, YrdC-like spans 14–193 (SRLQQRARKQ…IDLESGRVLR (180 aa)).

Belongs to the SUA5 family. TsaC subfamily.

It localises to the cytoplasm. The enzyme catalyses L-threonine + hydrogencarbonate + ATP = L-threonylcarbamoyladenylate + diphosphate + H2O. In terms of biological role, required for the formation of a threonylcarbamoyl group on adenosine at position 37 (t(6)A37) in tRNAs that read codons beginning with adenine. Catalyzes the conversion of L-threonine, HCO(3)(-)/CO(2) and ATP to give threonylcarbamoyl-AMP (TC-AMP) as the acyladenylate intermediate, with the release of diphosphate. The polypeptide is Threonylcarbamoyl-AMP synthase (Chromobacterium violaceum (strain ATCC 12472 / DSM 30191 / JCM 1249 / CCUG 213 / NBRC 12614 / NCIMB 9131 / NCTC 9757 / MK)).